Here is a 390-residue protein sequence, read N- to C-terminus: Aspartate carbamoyltransferase, chloroplastic (390 aa).

A chloroplast-targeting transit peptide spans 1 to 68 (MSIASSLTSA…NLTRNVGPVR (68 aa)). Positions 136 and 137 each coordinate carbamoyl phosphate. 2 residues coordinate UMP: arginine 136 and threonine 137. Residue lysine 166 participates in L-aspartate binding. The carbamoyl phosphate site is built by arginine 187, histidine 215, and glutamine 218. The UMP site is built by arginine 187 and histidine 215. Positions 248 and 310 each coordinate UMP. 2 residues coordinate L-aspartate: arginine 248 and arginine 310. Carbamoyl phosphate is bound by residues leucine 350 and proline 351.

This sequence belongs to the aspartate/ornithine carbamoyltransferase superfamily. ATCase family. As to quaternary structure, homotrimer.

The protein resides in the plastid. Its subcellular location is the chloroplast. It carries out the reaction carbamoyl phosphate + L-aspartate = N-carbamoyl-L-aspartate + phosphate + H(+). It functions in the pathway pyrimidine metabolism; UMP biosynthesis via de novo pathway; (S)-dihydroorotate from bicarbonate: step 2/3. With respect to regulation, feedback inhibited by UMP. In terms of biological role, catalyzes the condensation of carbamoyl phosphate and aspartate to form carbamoyl aspartate and inorganic phosphate, the committed step in the de novo pyrimidine nucleotide biosynthesis pathway. The sequence is that of Aspartate carbamoyltransferase, chloroplastic (PYRB) from Arabidopsis thaliana (Mouse-ear cress).